We begin with the raw amino-acid sequence, 427 residues long: MSEEHQESYHSDNLIDLMNHTLTNDHLQLLKKLGEMAAKLRMNLFLVGGTVRDMLRGVPGGDLDLVIEGDALAFSQNVANVLGGKVKHHEPFATATWVGAENLKLDIVSARAESYAKPGALPTIRHSHITDDLARRDFSINAMAIHLHPASYGQLVDPFHGRHDLTNGLIRILHSQSFIDDPTRLLRGVRFVSRFNYRFEQKTANLALATQPALTNALANVSPERIVHELKLLCHETDPVSSFSKLEDLHVWQALLGLTFSSSSATHLSRLQEEQNGEPLHWFQAIATVGFLEDNWKASLVPFAITAMEQRFLQNIEDIQKRLTNMTRFSTDYLHKQLYQVPEEPLRFYALSSGEEMQKVLDLYLHQRKQLQPLLTGHDLMELGMKPSPLFKECLLLHECEQLKGTIENKQDALQFAREFFNHKQPL.

49–52 (GTVR) contributes to the ATP binding site. Residues aspartate 62 and aspartate 64 each contribute to the Mg(2+) site. ATP-binding positions include 136-137 (RD), asparagine 141, 181-190 (DPTRLLRGVR), arginine 194, and arginine 225.

Belongs to the tRNA nucleotidyltransferase/poly(A) polymerase family. It depends on Mg(2+) as a cofactor.

The catalysed reaction is a tRNA with a 3' CC end + ATP = a tRNA with a 3' CCA end + diphosphate. Functionally, tRNA nucleotidyltransferase involved in the synthesis of the tRNA CCA terminus. Adds the terminal adenosine residue to tRNA. The protein is A-adding tRNA nucleotidyltransferase of Halalkalibacterium halodurans (strain ATCC BAA-125 / DSM 18197 / FERM 7344 / JCM 9153 / C-125) (Bacillus halodurans).